The sequence spans 203 residues: Glycerol-3-phosphate acyltransferase (203 aa).

4 consecutive transmembrane segments (helical) span residues 3 to 23, 75 to 95, 113 to 133, and 156 to 176; these read LASA…AILV, LGLE…GHLF, VILG…LIVA, and LLTG…LIYW.

This sequence belongs to the PlsY family. As to quaternary structure, probably interacts with PlsX.

The protein localises to the cell inner membrane. It catalyses the reaction an acyl phosphate + sn-glycerol 3-phosphate = a 1-acyl-sn-glycero-3-phosphate + phosphate. The protein operates within lipid metabolism; phospholipid metabolism. In terms of biological role, catalyzes the transfer of an acyl group from acyl-phosphate (acyl-PO(4)) to glycerol-3-phosphate (G3P) to form lysophosphatidic acid (LPA). This enzyme utilizes acyl-phosphate as fatty acyl donor, but not acyl-CoA or acyl-ACP. This is Glycerol-3-phosphate acyltransferase from Thioalkalivibrio sulfidiphilus (strain HL-EbGR7).